We begin with the raw amino-acid sequence, 1390 residues long: Hepatocyte growth factor receptor (1390 aa).

A signal peptide spans M1–G24. Residues E25 to T932 are Extracellular-facing. The 489-residue stretch at K27 to L515 folds into the Sema domain. N-linked (GlcNAc...) asparagine glycosylation occurs at N45. Cystine bridges form between C95–C101, C98–C160, C133–C141, and C172–C175. N106 carries an N-linked (GlcNAc...) asparagine glycan. Residue N149 is glycosylated (N-linked (GlcNAc...) asparagine). N202 carries N-linked (GlcNAc...) asparagine glycosylation. 2 cysteine pairs are disulfide-bonded: C298-C363 and C385-C397. N-linked (GlcNAc...) asparagine glycosylation is found at N399 and N405. 4 cysteine pairs are disulfide-bonded: C520/C538, C526/C561, C529/C545, and C541/C551. 3 IPT/TIG domains span residues P563–V655, P657–R739, and P742–V836. The O-linked (Man) threonine glycan is linked to T582. Residues N607 and N635 are each glycosylated (N-linked (GlcNAc...) asparagine). Residues T676 and T761 are each glycosylated (O-linked (Man) threonine). N785, N879, and N930 each carry an N-linked (GlcNAc...) asparagine glycan. A helical membrane pass occupies residues G933 to L955. The Cytoplasmic segment spans residues K956–S1390. S966 carries the phosphoserine modification. Position 977 is a phosphothreonine (T977). 3 positions are modified to phosphoserine: S990, S997, and S1000. Y1003 carries the phosphotyrosine modification. The 268-residue stretch at V1078–I1345 folds into the Protein kinase domain. ATP is bound by residues I1084–V1092 and K1110. D1204 serves as the catalytic Proton acceptor. The interaction with RANBP9 stretch occupies residues L1212 to S1390. The residue at position 1230 (Y1230) is a Phosphotyrosine. Phosphotyrosine; by autocatalysis occurs at positions 1234 and 1235. T1289 is subject to Phosphothreonine. Positions W1320–V1359 are interaction with MUC20. Y1349 and Y1356 each carry phosphotyrosine; by autocatalysis. Y1365 bears the Phosphotyrosine mark.

This sequence belongs to the protein kinase superfamily. Tyr protein kinase family. Heterodimer made of an alpha chain (50 kDa) and a beta chain (145 kDa) which are disulfide linked. Binds PLXNB1. Interacts when phosphorylated with downstream effectors including STAT3, PIK3R1, SRC, PCLG1, GRB2 and GAB1. Interacts with SPSB1, SPSB2 and SPSB4. Interacts with INPP5D/SHIP1. When phosphorylated at Tyr-1356, interacts with INPPL1/SHIP2. Interacts with RANBP9 and RANBP10, as well as SPSB1, SPSB2, SPSB3 and SPSB4. SPSB1 binding occurs in the presence and in the absence of HGF, however HGF treatment has a positive effect on this interaction. Interacts with MUC20; prevents interaction with GRB2 and suppresses hepatocyte growth factor-induced cell proliferation. Interacts with GRB10. Interacts with PTPN1 and PTPN2. Interacts with HSP90AA1 and HSP90AB1; the interaction suppresses MET kinase activity. Interacts with tensin TNS3. Interacts (when phosphorylated) with tensin TNS4 (via SH2 domain); the interaction increases MET protein stability by inhibiting MET endocytosis and subsequent lysosomal degradation. Post-translationally, autophosphorylated in response to ligand binding on Tyr-1234 and Tyr-1235 in the kinase domain leading to further phosphorylation of Tyr-1349 and Tyr-1356 in the C-terminal multifunctional docking site. Dephosphorylated by PTPRJ at Tyr-1349 and Tyr-1365. Dephosphorylated by PTPN1 and PTPN2. Ubiquitinated. Ubiquitination by CBL regulates the receptor stability and activity through proteasomal degradation. In terms of processing, O-mannosylation of IPT/TIG domains by TMEM260 is required for protein maturation. O-mannosylated residues are composed of single mannose glycans that are not elongated or modified.

It localises to the membrane. It catalyses the reaction L-tyrosyl-[protein] + ATP = O-phospho-L-tyrosyl-[protein] + ADP + H(+). Its activity is regulated as follows. In its inactive state, the C-terminal tail interacts with the catalytic domain and inhibits the kinase activity. Upon ligand binding, the C-terminal tail is displaced and becomes phosphorylated, thus increasing the kinase activity. Receptor tyrosine kinase that transduces signals from the extracellular matrix into the cytoplasm by binding to hepatocyte growth factor/HGF ligand. Regulates many physiological processes including proliferation, scattering, morphogenesis and survival. Ligand binding at the cell surface induces autophosphorylation of MET on its intracellular domain that provides docking sites for downstream signaling molecules. Following activation by ligand, interacts with the PI3-kinase subunit PIK3R1, PLCG1, SRC, GRB2, STAT3 or the adapter GAB1. Recruitment of these downstream effectors by MET leads to the activation of several signaling cascades including the RAS-ERK, PI3 kinase-AKT, or PLCgamma-PKC. The RAS-ERK activation is associated with the morphogenetic effects while PI3K/AKT coordinates prosurvival effects. During embryonic development, MET signaling plays a role in gastrulation, development and migration of muscles and neuronal precursors, angiogenesis and kidney formation. In adults, participates in wound healing as well as organ regeneration and tissue remodeling. Also promotes differentiation and proliferation of hematopoietic cells. The chain is Hepatocyte growth factor receptor (MET) from Pongo abelii (Sumatran orangutan).